The chain runs to 87 residues: Phosphoribosyl-ATP pyrophosphatase (87 aa).

This sequence belongs to the PRA-PH family.

The protein resides in the cytoplasm. The catalysed reaction is 1-(5-phospho-beta-D-ribosyl)-ATP + H2O = 1-(5-phospho-beta-D-ribosyl)-5'-AMP + diphosphate + H(+). Its pathway is amino-acid biosynthesis; L-histidine biosynthesis; L-histidine from 5-phospho-alpha-D-ribose 1-diphosphate: step 2/9. The protein is Phosphoribosyl-ATP pyrophosphatase of Pseudarthrobacter chlorophenolicus (strain ATCC 700700 / DSM 12829 / CIP 107037 / JCM 12360 / KCTC 9906 / NCIMB 13794 / A6) (Arthrobacter chlorophenolicus).